The primary structure comprises 73 residues: UPF0346 protein LVIS_0790 (73 aa).

The protein belongs to the UPF0346 family.

In Levilactobacillus brevis (strain ATCC 367 / BCRC 12310 / CIP 105137 / JCM 1170 / LMG 11437 / NCIMB 947 / NCTC 947) (Lactobacillus brevis), this protein is UPF0346 protein LVIS_0790.